The sequence spans 262 residues: Putative ABC transporter ATP-binding protein SAV_3608 (262 aa).

The ABC transporter domain maps to 18–248 (LDVAGLAFAY…DTLMRAHRLE (231 aa)). 51 to 58 (GPNGAGKT) is a binding site for ATP.

Belongs to the ABC transporter superfamily.

It is found in the cell membrane. Its function is as follows. Probably part of an ABC transporter complex. Responsible for energy coupling to the transport system. In Streptomyces avermitilis (strain ATCC 31267 / DSM 46492 / JCM 5070 / NBRC 14893 / NCIMB 12804 / NRRL 8165 / MA-4680), this protein is Putative ABC transporter ATP-binding protein SAV_3608.